A 979-amino-acid chain; its full sequence is Protein SMAX1-LIKE 6 (979 aa).

The region spanning 8-190 (ARECLTEEAA…PVTQLSSRFS (183 aa)) is the Clp R domain. 2 repeat regions span residues 12-86 (LTEE…LDRL) and 100-190 (VSNS…SRFS). The EAR signature appears at 833 to 837 (LDLNL).

This sequence belongs to the ClpA/ClpB family. Interacts with TPL/TPR in an EAR-motif dependent manner. Interacts with TPR3. Interacts with MAX2 and TPR2. Interacts with D14. The interaction with D14 occurs in the presence of (2'R) stereoisomers of strigolactones, but not (2'S) stereoisomers. Post-translationally, ubiquitinated upon strigolactone treatment. Probable proteolytic target of SCF(MAX2)-mediated stigolactone signaling. In terms of tissue distribution, detected in roots, seedlings and axillary branches. Expressed in the primary rosette buds and expanding leaves of adult rosettes, the vasculature of the hypocotyls, cotyledons, and mature roots, and in the midvein and petioles of young leaves.

Its subcellular location is the nucleus. In terms of biological role, probable component of a transcriptional corepressor complex involved in branching control. Regulates cotyledon expansion and lateral root growth, but not germination or hypocotyl elongation. Promotes auxin transport and PIN1 accumulation in the stem and represses BRC1/TCP18 expression in axillary buds. The sequence is that of Protein SMAX1-LIKE 6 from Arabidopsis thaliana (Mouse-ear cress).